A 168-amino-acid chain; its full sequence is Putative gustatory receptor clone PTE03 (168 aa).

Topologically, residues 1 to 25 are extracellular; sequence TTVPKMLINLQKQNKAISYAGCITQ. C22 and C104 are disulfide-bonded. A helical transmembrane segment spans residues 26-45; that stretch reads LSFVLLFAGMENFLLAAMAY. Over 46–67 the chain is Cytoplasmic; it reads DRYVAICKPLRYTAIMKAHLCL. The helical transmembrane segment at 68–88 threads the bilayer; that stretch reads VMTLLSLCISIVDALLHGLMI. The Extracellular portion of the chain corresponds to 89–121; sequence LRLSFCTFLEIPHYFCELYQVIKLSCSDTLINN. A helical transmembrane segment spans residues 122–143; sequence ILVYTMTSTLGGVPLGGIIFSY. Over 144 to 165 the chain is Cytoplasmic; that stretch reads FKIISSILRMPSSGSRHRAFST. A helical membrane pass occupies residues 166–168; sequence CGS.

Belongs to the G-protein coupled receptor 1 family. In terms of tissue distribution, tongue specific.

It is found in the cell membrane. Possible taste receptor. This chain is Putative gustatory receptor clone PTE03 (Olr1145), found in Rattus norvegicus (Rat).